The sequence spans 573 residues: DNA polymerase lambda (573 aa).

The region spanning 35 to 131 (DARGWLSSLR…KLTDTDGFSL (97 aa)) is the BRCT domain. Residues 126–235 (TDGFSLSSPK…GPDPAPEALG (110 aa)) form a disordered region. Positions 127-149 (DGFSLSSPKRSLNEPQPSKSGQD) are enriched in polar residues. The tract at residues 263–277 (KAYNVQGDKWRALGY) is DNA-binding. Lys310 (schiff-base intermediate with DNA) is an active-site residue. The segment at 343-346 (GTKT) is DNA-binding. Residues Arg384, 415 to 418 (SFRR), and 424 to 427 (GDVD) contribute to the dCTP site. Positions 418–427 (RGKVTCGDVD) are involved in primer binding. Positions 425, 427, and 488 each coordinate Mn(2+). The DNA-binding stretch occupies residues 464–503 (ENGQQQKYLGVCRLPGAGQRHRRLDIIVVPYSEFACALLY). Residue Asn511 coordinates dCTP.

It belongs to the DNA polymerase type-X family. Interacts with PCNA. Interacts with PAXX; promoting POLL recruitment to double-strand breaks (DSBs) and stimulation of the end-filling activity of POLL. Interacts with XRCC4; promoting POLL recruitment to double-strand breaks (DSBs) and stimulation of the end-filling activity of POLL. Interacts with NHEJ1/XLF; promoting POLL recruitment to double-strand breaks (DSBs) and stimulation of the end-filling activity of POLL. The cofactor is Mn(2+).

The protein localises to the nucleus. It carries out the reaction DNA(n) + a 2'-deoxyribonucleoside 5'-triphosphate = DNA(n+1) + diphosphate. In terms of biological role, DNA polymerase that functions in several pathways of DNA repair. Involved in base excision repair (BER) responsible for repair of lesions that give rise to abasic (AP) sites in DNA. Also contributes to DNA double-strand break repair by non-homologous end joining and homologous recombination. Has both template-dependent and template-independent (terminal transferase) DNA polymerase activities. Also has a 5'-deoxyribose-5-phosphate lyase (dRP lyase) activity. This chain is DNA polymerase lambda, found in Rattus norvegicus (Rat).